The chain runs to 952 residues: Isoleucine--tRNA ligase (952 aa).

A 'HIGH' region motif is present at residues 58-68; that stretch reads PYANGDIHIGH. Glutamate 576 is a binding site for L-isoleucyl-5'-AMP. The short motif at 617 to 621 is the 'KMSKS' region element; sequence KMSKS. Lysine 620 contacts ATP. Zn(2+) is bound by residues cysteine 915, cysteine 918, cysteine 935, and cysteine 938.

The protein belongs to the class-I aminoacyl-tRNA synthetase family. IleS type 1 subfamily. Monomer. Zn(2+) serves as cofactor.

The protein resides in the cytoplasm. The enzyme catalyses tRNA(Ile) + L-isoleucine + ATP = L-isoleucyl-tRNA(Ile) + AMP + diphosphate. Catalyzes the attachment of isoleucine to tRNA(Ile). As IleRS can inadvertently accommodate and process structurally similar amino acids such as valine, to avoid such errors it has two additional distinct tRNA(Ile)-dependent editing activities. One activity is designated as 'pretransfer' editing and involves the hydrolysis of activated Val-AMP. The other activity is designated 'posttransfer' editing and involves deacylation of mischarged Val-tRNA(Ile). The sequence is that of Isoleucine--tRNA ligase from Vibrio atlanticus (strain LGP32) (Vibrio splendidus (strain Mel32)).